The primary structure comprises 202 residues: Dephospho-CoA kinase (202 aa).

The DPCK domain maps to Lys6–Leu202. Ser14 to Glu19 contacts ATP.

Belongs to the CoaE family.

Its subcellular location is the cytoplasm. The enzyme catalyses 3'-dephospho-CoA + ATP = ADP + CoA + H(+). The protein operates within cofactor biosynthesis; coenzyme A biosynthesis; CoA from (R)-pantothenate: step 5/5. Functionally, catalyzes the phosphorylation of the 3'-hydroxyl group of dephosphocoenzyme A to form coenzyme A. The polypeptide is Dephospho-CoA kinase (Chlamydia pneumoniae (Chlamydophila pneumoniae)).